Consider the following 332-residue polypeptide: DNA-directed RNA polymerase subunit alpha (332 aa).

Residues methionine 1–glutamate 232 form an alpha N-terminal domain (alpha-NTD) region. Residues isoleucine 247–glycine 332 form an alpha C-terminal domain (alpha-CTD) region.

This sequence belongs to the RNA polymerase alpha chain family. As to quaternary structure, homodimer. The RNAP catalytic core consists of 2 alpha, 1 beta, 1 beta' and 1 omega subunit. When a sigma factor is associated with the core the holoenzyme is formed, which can initiate transcription.

The enzyme catalyses RNA(n) + a ribonucleoside 5'-triphosphate = RNA(n+1) + diphosphate. DNA-dependent RNA polymerase catalyzes the transcription of DNA into RNA using the four ribonucleoside triphosphates as substrates. This Halorhodospira halophila (strain DSM 244 / SL1) (Ectothiorhodospira halophila (strain DSM 244 / SL1)) protein is DNA-directed RNA polymerase subunit alpha.